The chain runs to 85 residues: U4-theraphotoxin-Hhn1a (85 aa).

An N-terminal signal peptide occupies residues 1 to 22 (MKMTLIAILTCAAVLVLHTTAA). A propeptide spanning residues 23-48 (EELEAESQLMEVGMPDTELEAVDEER) is cleaved from the precursor. 3 disulfides stabilise this stretch: C52–C66, C56–C77, and C71–C82.

Belongs to the neurotoxin 12 (Hwtx-2) family. 02 (Hwtx-2) subfamily. Monomer. In terms of tissue distribution, expressed by the venom gland.

It is found in the secreted. In terms of biological role, neurotoxin active on both insects and mammals. This chain is U4-theraphotoxin-Hhn1a, found in Cyriopagopus hainanus (Chinese bird spider).